A 124-amino-acid polypeptide reads, in one-letter code: Large ribosomal subunit protein bL12 (124 aa).

The protein belongs to the bacterial ribosomal protein bL12 family. Homodimer. Part of the ribosomal stalk of the 50S ribosomal subunit. Forms a multimeric L10(L12)X complex, where L10 forms an elongated spine to which 2 to 4 L12 dimers bind in a sequential fashion. Binds GTP-bound translation factors.

In terms of biological role, forms part of the ribosomal stalk which helps the ribosome interact with GTP-bound translation factors. Is thus essential for accurate translation. This chain is Large ribosomal subunit protein bL12, found in Wolinella succinogenes (strain ATCC 29543 / DSM 1740 / CCUG 13145 / JCM 31913 / LMG 7466 / NCTC 11488 / FDC 602W) (Vibrio succinogenes).